We begin with the raw amino-acid sequence, 151 residues long: UPF0251 protein Ctha_0452 (151 aa).

It belongs to the UPF0251 family.

The protein is UPF0251 protein Ctha_0452 of Chloroherpeton thalassium (strain ATCC 35110 / GB-78).